Here is a 268-residue protein sequence, read N- to C-terminus: Interferon alpha/beta receptor 2 (268 aa).

A signal peptide spans methionine 1–serine 16. At methionine 17–proline 223 the chain is on the extracellular side. 2 Fibronectin type-III domains span residues leucine 18 to threonine 114 and leucine 115 to threonine 217. 2 disulfide bridges follow: cysteine 65–cysteine 74 and cysteine 191–cysteine 211. The helical transmembrane segment at valine 224–valine 244 threads the bilayer. Over tyrosine 245 to glycine 268 the chain is Cytoplasmic.

The protein belongs to the type II cytokine receptor family. As to quaternary structure, heterodimer with IFNAR1; forming the receptor for type I interferon.

It is found in the cell membrane. The protein localises to the cytoplasm. Together with IFNAR1, forms the heterodimeric receptor for type I interferons (including interferons alpha, beta, epsilon, omega and kappa). Type I interferon binding activates the JAK-STAT signaling cascade, resulting in transcriptional activation or repression of interferon-regulated genes that encode the effectors of the interferon response. Mechanistically, type I interferon-binding brings the IFNAR1 and IFNAR2 subunits into close proximity with one another, driving their associated Janus kinases (JAKs) (TYK2 bound to IFNAR1 and JAK1 bound to IFNAR2) to cross-phosphorylate one another. The activated kinases phosphorylate specific tyrosine residues on the intracellular domains of IFNAR1 and IFNAR2, forming docking sites for the STAT transcription factors (STAT1, STAT2 and STAT). STAT proteins are then phosphorylated by the JAKs, promoting their translocation into the nucleus to regulate expression of interferon-regulated genes. The polypeptide is Interferon alpha/beta receptor 2 (Oncorhynchus mykiss (Rainbow trout)).